We begin with the raw amino-acid sequence, 110 residues long: PCNA-associated factor (110 aa).

K15 participates in a covalent cross-link: Glycyl lysine isopeptide (Lys-Gly) (interchain with G-Cter in ubiquitin). The D-box motif lies at 23–34 (RKVLGSSTFVTN). The residue at position 24 (K24) is an N6-acetyllysine; alternate. Residue K24 forms a Glycyl lysine isopeptide (Lys-Gly) (interchain with G-Cter in ubiquitin); alternate linkage. At S28 the chain carries Phosphoserine. A compositionally biased stretch (low complexity) spans 29–39 (STFVTNSSGSS). The tract at residues 29–110 (STFVTNSSGS…QPDHRDDENE (82 aa)) is disordered. Positions 61 to 71 (QKGIGEFFRLS) match the PIP-box motif. Position 71 is a phosphoserine (S71). Residues 71-80 (SPKDSKKENQ) show a composition bias toward basic and acidic residues. The KEN box motif lies at 77-79 (KEN). The Initiation motif signature appears at 84 to 96 (EAGSSGLGKAKRK).

As to quaternary structure, interacts (when monoubiquitinated at Lys-15 and Lys-24) with PCNA. Interacts with isoform 2/p33ING1b of ING1. Interacts with BRCA1. Monoubiquitinated at Lys-15 and Lys-24 during normal S phase, promoting its association with PCNA. Also diubiquitinated at these 2 sites. Following DNA damage, monoubiquitin chains at Lys-15 and Lys-24 are probably extended, leading to disrupt the interaction with PCNA. Polyubiquitinated by the APC/C complex at the mitotic exit, leading to its degradation by the proteasome.

It is found in the nucleus. It localises to the cytoplasm. The protein resides in the perinuclear region. Functionally, PCNA-binding protein that acts as a regulator of DNA repair during DNA replication. Following DNA damage, the interaction with PCNA is disrupted, facilitating the interaction between monoubiquitinated PCNA and the translesion DNA synthesis DNA polymerase eta (POLH) at stalled replisomes, facilitating the bypass of replication-fork-blocking lesions. Also acts as a regulator of centrosome number. In Rattus norvegicus (Rat), this protein is PCNA-associated factor.